Here is a 62-residue protein sequence, read N- to C-terminus: Conotoxin Lt5.5 (62 aa).

An N-terminal signal peptide occupies residues Met-1–Ala-22. A propeptide spanning residues Gln-23 to Asn-48 is cleaved from the precursor.

This sequence belongs to the conotoxin T superfamily. In terms of processing, contains 2 disulfide bonds that can be either 'C1-C3, C2-C4' or 'C1-C4, C2-C3', since these disulfide connectivities have been observed for conotoxins with cysteine framework V (for examples, see AC P0DQQ7 and AC P81755). As to expression, expressed by the venom duct.

The protein localises to the secreted. This Conus litteratus (Lettered cone) protein is Conotoxin Lt5.5.